A 328-amino-acid polypeptide reads, in one-letter code: Phosphate acyltransferase (328 aa).

The protein belongs to the PlsX family. In terms of assembly, homodimer. Probably interacts with PlsY.

It is found in the cytoplasm. The enzyme catalyses a fatty acyl-[ACP] + phosphate = an acyl phosphate + holo-[ACP]. Its pathway is lipid metabolism; phospholipid metabolism. Functionally, catalyzes the reversible formation of acyl-phosphate (acyl-PO(4)) from acyl-[acyl-carrier-protein] (acyl-ACP). This enzyme utilizes acyl-ACP as fatty acyl donor, but not acyl-CoA. The sequence is that of Phosphate acyltransferase from Campylobacter jejuni subsp. jejuni serotype O:23/36 (strain 81-176).